We begin with the raw amino-acid sequence, 217 residues long: Imidazole glycerol phosphate synthase subunit HisH (217 aa).

A Glutamine amidotransferase type-1 domain is found at 3–217 (SVAVIDYGMG…FLRWEPWSSR (215 aa)). Catalysis depends on C82, which acts as the Nucleophile. Residues H193 and E195 contribute to the active site.

Heterodimer of HisH and HisF.

It localises to the cytoplasm. It catalyses the reaction 5-[(5-phospho-1-deoxy-D-ribulos-1-ylimino)methylamino]-1-(5-phospho-beta-D-ribosyl)imidazole-4-carboxamide + L-glutamine = D-erythro-1-(imidazol-4-yl)glycerol 3-phosphate + 5-amino-1-(5-phospho-beta-D-ribosyl)imidazole-4-carboxamide + L-glutamate + H(+). The enzyme catalyses L-glutamine + H2O = L-glutamate + NH4(+). It participates in amino-acid biosynthesis; L-histidine biosynthesis; L-histidine from 5-phospho-alpha-D-ribose 1-diphosphate: step 5/9. Functionally, IGPS catalyzes the conversion of PRFAR and glutamine to IGP, AICAR and glutamate. The HisH subunit catalyzes the hydrolysis of glutamine to glutamate and ammonia as part of the synthesis of IGP and AICAR. The resulting ammonia molecule is channeled to the active site of HisF. In Methylococcus capsulatus (strain ATCC 33009 / NCIMB 11132 / Bath), this protein is Imidazole glycerol phosphate synthase subunit HisH.